The chain runs to 255 residues: uncharacterized protein (255 aa).

Disordered regions lie at residues 112-145 and 157-183; these read CWPG…PSPG and GLAE…PDAQ.

This is an uncharacterized protein from Rhodospirillum rubrum.